We begin with the raw amino-acid sequence, 142 residues long: Hemoglobin subunit zeta (142 aa).

Serine 2 carries the post-translational modification N-acetylserine. Residues 2-142 (SLTKTERTII…VSSVLTEKYR (141 aa)) enclose the Globin domain. Position 29 is a phosphothreonine (threonine 29). Serine 53 is subject to Phosphoserine. Histidine 59 is a binding site for heme b. Phosphoserine is present on residues serine 73 and serine 82. Residue histidine 88 coordinates heme b.

Belongs to the globin family. As to quaternary structure, heterotetramer of two zeta chains and two epsilon chains in early embryonic hemoglobin Gower-1; two zeta chains and two gamma chains in fetal hemoglobin Portland-1. Heterotetramer of two zeta chains and two beta chains in hemoglobin Portland-2, detected in fetuses and neonates with homozygous alpha-thalassemia. In terms of tissue distribution, detected in fetal erythrocytes (at protein level).

The zeta chain is an alpha-type chain of mammalian embryonic hemoglobin. In Homo sapiens (Human), this protein is Hemoglobin subunit zeta (HBZ).